The sequence spans 806 residues: Phenylalanine--tRNA ligase beta subunit (806 aa).

Residues asparagine 40 to leucine 155 form the tRNA-binding domain. The B5 domain occupies valine 409–valine 484. Positions 462, 468, 471, and 472 each coordinate Mg(2+). Positions proline 712–arginine 805 constitute an FDX-ACB domain.

Belongs to the phenylalanyl-tRNA synthetase beta subunit family. Type 1 subfamily. As to quaternary structure, tetramer of two alpha and two beta subunits. Requires Mg(2+) as cofactor.

It is found in the cytoplasm. It carries out the reaction tRNA(Phe) + L-phenylalanine + ATP = L-phenylalanyl-tRNA(Phe) + AMP + diphosphate + H(+). This chain is Phenylalanine--tRNA ligase beta subunit, found in Bacillus thuringiensis subsp. konkukian (strain 97-27).